A 248-amino-acid polypeptide reads, in one-letter code: PF03932 family protein CutC (248 aa).

This sequence belongs to the CutC family. Homodimer.

It localises to the cytoplasm. In Escherichia coli (strain SMS-3-5 / SECEC), this protein is PF03932 family protein CutC.